The sequence spans 168 residues: MSQNTKHHRVTNYRRRDLRNTLESRLGLPVEKRRLVPQLFRLKITNIGLDVSDYTILDIIKEFGEPEYINFRDHKDSRSCISDFKDNEIATKLIEKYNNFEINGKSIQVTLLDQQKRKRDADQERRKLRHGPRGGYGSHYTKSQKPIEQRNKTVDELNAELDAYMKES.

The region spanning 40–114 is the RRM domain; it reads FRLKITNIGL…KSIQVTLLDQ (75 aa). A disordered region spans residues 113–152; it reads DQQKRKRDADQERRKLRHGPRGGYGSHYTKSQKPIEQRNK.

It belongs to the YRA1 family. As to quaternary structure, associates with mRNPs.

The protein localises to the nucleus. Its function is as follows. Involved in export of poly(A) mRNAs from the nucleus. Recruited to the coding sequences as well as poly-A sites of active genes. The sequence is that of RNA annealing protein YRA2 (YRA2) from Candida glabrata (strain ATCC 2001 / BCRC 20586 / JCM 3761 / NBRC 0622 / NRRL Y-65 / CBS 138) (Yeast).